The primary structure comprises 499 residues: uncharacterized protein (499 aa).

A run of 12 helical transmembrane segments spans residues 51–71 (LLFR…LVAF), 98–118 (IIAS…TLLM), 127–147 (LAFI…CHNF), 155–175 (LVLG…LTMI), 187–207 (YLFA…YAVL), 220–240 (WLFI…YFII), 301–321 (CLYG…YTSL), 325–345 (YMTI…SFLS), 352–372 (GIIL…LLAC), 378–398 (VLYF…GLNV), 412–432 (ATAI…AGQI), and 444–464 (LTSL…IFFL).

The protein belongs to the major facilitator superfamily. Allantoate permease family.

It is found in the golgi apparatus. The protein resides in the membrane. This is an uncharacterized protein from Schizosaccharomyces pombe (strain 972 / ATCC 24843) (Fission yeast).